The chain runs to 529 residues: E3 ubiquitin-protein ligase arih1 (529 aa).

Disordered stretches follow at residues 1 to 29 (MDSD…HEDE) and 46 to 69 (ERAG…EEDE). Positions 51–64 (CGEGGGSALGPGPG) are enriched in gly residues. The interval 77–125 (TAEQILQHMVECIREVNEVIQNPATITRILLSHFNWDKEKLMERYFDGN) is UBA-like. Residues 154 to 365 (LDMPCQICYL…SAWYNCNRYN (212 aa)) are TRIAD supradomain. Zn(2+) contacts are provided by Cys-158, Cys-161, Cys-175, His-177, Cys-180, Cys-183, Cys-203, Cys-208, Cys-248, Cys-253, Cys-269, Cys-271, Cys-276, Cys-279, His-284, Cys-289, Cys-316, and Cys-319. An RING-type 1 zinc finger spans residues 158–208 (CQICYLNYPNSYFTGLECGHKFCMQCWGEYLTTKIIEEGMGQTISCPAHGC). The IBR-type zinc finger occupies 228 to 289 (LKYQHLITNS…GENWHDPVKC (62 aa)). The segment at 316-347 (CPKCHVTIEKDGGCNHMVCRNQNCKAEFCWVC) adopts an RING-type 2; atypical zinc-finger fold. Cys-329 is an active-site residue. Positions 334, 339, 344, 347, 354, and 361 each coordinate Zn(2+). The ariadne domain stretch occupies residues 380-529 (RAALQRYLFY…EKDLWEYIED (150 aa)).

The protein belongs to the RBR family. Ariadne subfamily. In terms of assembly, interacts (via the first RING-type zinc finger) with ube2l3. Associates with cullin-RING ubiquitin ligase (CRL) complexes containing neddylated cullin.

Its subcellular location is the cytoplasm. It localises to the nucleus. It catalyses the reaction [E2 ubiquitin-conjugating enzyme]-S-ubiquitinyl-L-cysteine + [acceptor protein]-L-lysine = [E2 ubiquitin-conjugating enzyme]-L-cysteine + [acceptor protein]-N(6)-ubiquitinyl-L-lysine.. It functions in the pathway protein modification; protein ubiquitination. With respect to regulation, autoinhibited by the ariadne domain, which masks the second RING-type zinc finger that contains the active site and inhibits the E3 activity. Inhibition is relieved upon binding to neddylated cullin-RING ubiquitin ligase complexes, which activate the E3 ligase activity of ARIH1. Functionally, E3 ubiquitin-protein ligase, which catalyzes ubiquitination of target proteins together with ubiquitin-conjugating enzyme E2 ube2l3. Acts as an atypical E3 ubiquitin-protein ligase by working together with cullin-RING ubiquitin ligase (CRL) complexes and initiating ubiquitination of CRL substrates: associates with CRL complexes and specifically mediates addition of the first ubiquitin on CRLs targets. The initial ubiquitin is then elongated. E3 ubiquitin-protein ligase activity is activated upon binding to neddylated cullin-RING ubiquitin ligase complexes. This Xenopus laevis (African clawed frog) protein is E3 ubiquitin-protein ligase arih1 (arih1).